Here is a 465-residue protein sequence, read N- to C-terminus: Beta-1,2-xylosyltransferase XYXT1 (465 aa).

Residues 1–11 (MKAAVRSKKSK) are Cytoplasmic-facing. Residues 12 to 32 (GSFCHPPLLLLIVAIQFLVIY) form a helical; Signal-anchor for type II membrane protein membrane-spanning segment. At 33–465 (SPTLDQYMVM…VLLKALHLLR (433 aa)) the chain is on the lumenal side. N-linked (GlcNAc...) asparagine glycans are attached at residues N80, N118, N125, N266, and N403.

The protein belongs to the glycosyltransferase 61 family. As to expression, widely expressed.

Its subcellular location is the golgi apparatus membrane. The protein operates within glycan metabolism. Functionally, glycosyltransferase involved in the xylosylation of xylan, the major hemicellulose (non-cellulosic component) of primary and secondary walls of angiosperms. Possesses beta-1,2-xylosyltransferase activity, transferring xylose from UDP-xylose to the xylan backbone. Catalyzes the addition of 2-O-xylosyl side chains to the xylan backbone. The polypeptide is Beta-1,2-xylosyltransferase XYXT1 (Oryza sativa subsp. japonica (Rice)).